A 340-amino-acid chain; its full sequence is N-acetyl-gamma-glutamyl-phosphate reductase (340 aa).

Cys146 is a catalytic residue.

Belongs to the NAGSA dehydrogenase family. Type 1 subfamily.

It localises to the cytoplasm. It catalyses the reaction N-acetyl-L-glutamate 5-semialdehyde + phosphate + NADP(+) = N-acetyl-L-glutamyl 5-phosphate + NADPH + H(+). It participates in amino-acid biosynthesis; L-arginine biosynthesis; N(2)-acetyl-L-ornithine from L-glutamate: step 3/4. In terms of biological role, catalyzes the NADPH-dependent reduction of N-acetyl-5-glutamyl phosphate to yield N-acetyl-L-glutamate 5-semialdehyde. This Rubrobacter xylanophilus (strain DSM 9941 / JCM 11954 / NBRC 16129 / PRD-1) protein is N-acetyl-gamma-glutamyl-phosphate reductase.